A 1294-amino-acid chain; its full sequence is MVSNSFWLFILLVSFIPISAWAESRDISTLFTLRDSITEGKGFLRNWFDSETPPCSWSGITCIGHNVVAIDLSSVPLYAPFPLCIGAFQSLVRLNFSGCGFSGELPEALGNLQNLQYLDLSNNELTGPIPISLYNLKMLKEMVLDYNSLSGQLSPAIAQLQHLTKLSISMNSISGSLPPDLGSLKNLELLDIKMNTFNGSIPATFGNLSCLLHFDASQNNLTGSIFPGITSLTNLLTLDLSSNSFEGTIPREIGQLENLELLILGKNDLTGRIPQEIGSLKQLKLLHLEECQFTGKIPWSISGLSSLTELDISDNNFDAELPSSMGELGNLTQLIAKNAGLSGNMPKELGNCKKLTVINLSFNALIGPIPEEFADLEAIVSFFVEGNKLSGRVPDWIQKWKNARSIRLGQNKFSGPLPVLPLQHLLSFAAESNLLSGSIPSHICQANSLHSLLLHHNNLTGTIDEAFKGCTNLTELNLLDNHIHGEVPGYLAELPLVTLELSQNKFAGMLPAELWESKTLLEISLSNNEITGPIPESIGKLSVLQRLHIDNNLLEGPIPQSVGDLRNLTNLSLRGNRLSGIIPLALFNCRKLATLDLSYNNLTGNIPSAISHLTLLDSLILSSNQLSGSIPAEICVGFENEAHPDSEFLQHHGLLDLSYNQLTGQIPTSIKNCAMVMVLNLQGNLLNGTIPVELGELTNLTSINLSFNEFVGPMLPWSGPLVQLQGLILSNNHLDGSIPAKIGQILPKIAVLDLSSNALTGTLPQSLLCNNYLNHLDVSNNHLSGHIQFSCPDGKEYSSTLLFFNSSSNHFSGSLDESISNFTQLSTLDIHNNSLTGRLPSALSDLSSLNYLDLSSNNLYGAIPCGICNIFGLSFANFSGNYIDMYSLADCAAGGICSTNGTDHKALHPYHRVRRAITICAFTFVIIIVLVLLAVYLRRKLVRSRPLAFESASKAKATVEPTSTDELLGKKSREPLSINLATFEHALLRVTADDILKATENFSKVHIIGDGGFGTVYKAALPEGRRVAIKRLHGGHQFQGDREFLAEMETIGKVKHPNLVPLLGYCVCGDERFLIYEYMENGSLEMWLRNRADALEALGWPDRLKICLGSARGLAFLHHGFVPHIIHRDMKSSNILLDENFEPRVSDFGLARIISACETHVSTDIAGTFGYIPPEYGLTMKSTTKGDVYSFGVVMLELLTGRPPTGQEEVQGGGNLVGWVRWMIARGKQNELFDPCLPVSSVWREQMARVLAIARDCTADEPFKRPTMLEVVKGLKMTHGMECGPLVVTVSRDM.

An N-terminal signal peptide occupies residues 1–22; that stretch reads MVSNSFWLFILLVSFIPISAWA. 5 LRR repeats span residues 88–112, 113–136, 138–160, 161–184, and 186–207; these read FQSL…LGNL, QNLQ…LYNL, MLKE…IAQL, QHLT…LGSL, and NLEL…TFGN. N-linked (GlcNAc...) asparagine glycosylation is found at Asn198, Asn207, and Asn220. LRR repeat units follow at residues 232–256, 258–280, 282–304, 305–328, 330–352, 353–376, 378–400, 401–422, 423–446, 447–469, 471–493, 494–517, 519–541, 542–565, 566–589, 591–613, 614–637, 649–673, 675–697, 698–721, 722–745, 746–770, and 772–794; these read LTNL…IGQL, NLEL…IGSL, QLKL…ISGL, SSLT…MGEL, NLTQ…LGNC, KKLT…FADL, AIVS…IQKW, KNAR…VLPL, QHLL…ICQA, NSLH…AFKG, TNLT…YLAE, LPLV…LWES, TLLE…IGKL, SVLQ…VGDL, RNLT…LFNC, KLAT…ISHL, TLLD…ICVG, LQHH…IKNC, MVMV…LGEL, TNLT…SGPL, VQLQ…IGQI, LPKI…LLCN, and YLNH…CPDG. N-linked (GlcNAc...) asparagine glycans are attached at residues Asn330 and Asn359. N-linked (GlcNAc...) asparagine glycosylation is found at Asn458 and Asn472. Asn567, Asn570, and Asn601 each carry an N-linked (GlcNAc...) asparagine glycan. N-linked (GlcNAc...) asparagine glycans are attached at residues Asn687, Asn699, and Asn704. 3 N-linked (GlcNAc...) asparagine glycosylation sites follow: Asn805, Asn821, and Asn832. 2 LRR repeats span residues 822 to 846 and 848 to 870; these read FTQL…LSDL and SLNY…ICNI. Residues 917–937 form a helical membrane-spanning segment; it reads ITICAFTFVIIIVLVLLAVYL. The Protein kinase domain maps to 1002–1282; sequence FSKVHIIGDG…KGLKMTHGME (281 aa). ATP contacts are provided by residues 1008–1016 and Lys1030; that span reads IGDGGFGTV. Asp1129 functions as the Proton acceptor in the catalytic mechanism.

This sequence belongs to the protein kinase superfamily. Ser/Thr protein kinase family. As to quaternary structure, interacts with TDL1A. As to expression, expressed in anthers and ovules during meiosis.

The protein resides in the cell membrane. The catalysed reaction is L-seryl-[protein] + ATP = O-phospho-L-seryl-[protein] + ADP + H(+). It catalyses the reaction L-threonyl-[protein] + ATP = O-phospho-L-threonyl-[protein] + ADP + H(+). Its function is as follows. Receptor-like kinase that plays important roles in restricting the number of cells entering into male and female sporogenesis. Involved in cell specification during anther development and initiation of anther wall formation. In Oryza sativa subsp. japonica (Rice), this protein is Leucine-rich repeat receptor protein kinase MSP1.